The chain runs to 297 residues: HTH-type transcriptional regulator ArgP (297 aa).

The region spanning 4 to 60 is the HTH lysR-type domain; it reads PDYRTLQALDAVIRERGFERAAQKLCITQSAVSQRIKQLENMFGQPLLVRTVPPRPT. A DNA-binding region (H-T-H motif) is located at residues 21-40; that stretch reads FERAAQKLCITQSAVSQRIK.

Belongs to the LysR transcriptional regulatory family. Homodimer.

Functionally, controls the transcription of genes involved in arginine and lysine metabolism. In Klebsiella pneumoniae subsp. pneumoniae (strain ATCC 700721 / MGH 78578), this protein is HTH-type transcriptional regulator ArgP.